Here is a 263-residue protein sequence, read N- to C-terminus: Tryptophan synthase alpha chain (263 aa).

Catalysis depends on proton acceptor residues glutamate 41 and aspartate 52.

Belongs to the TrpA family. Tetramer of two alpha and two beta chains.

It catalyses the reaction (1S,2R)-1-C-(indol-3-yl)glycerol 3-phosphate + L-serine = D-glyceraldehyde 3-phosphate + L-tryptophan + H2O. Its pathway is amino-acid biosynthesis; L-tryptophan biosynthesis; L-tryptophan from chorismate: step 5/5. Its function is as follows. The alpha subunit is responsible for the aldol cleavage of indoleglycerol phosphate to indole and glyceraldehyde 3-phosphate. The sequence is that of Tryptophan synthase alpha chain from Geobacillus sp. (strain WCH70).